The primary structure comprises 394 residues: Elongation factor Tu (394 aa).

Positions 10-204 (KPHINVGTIG…FLDSYIPEPK (195 aa)) constitute a tr-type G domain. Residues 19–26 (GHVDHGKT) form a G1 region. 19 to 26 (GHVDHGKT) contacts GTP. Position 26 (threonine 26) interacts with Mg(2+). The tract at residues 60-64 (GITIN) is G2. Residues 81–84 (DCPG) form a G3 region. GTP is bound by residues 81–85 (DCPGH) and 136–139 (NKCD). Residues 136–139 (NKCD) are G4. The G5 stretch occupies residues 174–176 (SAL).

It belongs to the TRAFAC class translation factor GTPase superfamily. Classic translation factor GTPase family. EF-Tu/EF-1A subfamily. In terms of assembly, monomer.

The protein resides in the cytoplasm. The enzyme catalyses GTP + H2O = GDP + phosphate + H(+). In terms of biological role, GTP hydrolase that promotes the GTP-dependent binding of aminoacyl-tRNA to the A-site of ribosomes during protein biosynthesis. The protein is Elongation factor Tu of Buchnera aphidicola subsp. Acyrthosiphon pisum (strain 5A).